Consider the following 397-residue polypeptide: Elongation factor Tu (397 aa).

Residues 10 to 206 form the tr-type G domain; that stretch reads KPHCNIGTIG…AVDTWIPDPQ (197 aa). Residues 19–26 are G1; it reads GHVDHGKT. Residue 19–26 coordinates GTP; it reads GHVDHGKT. A Mg(2+)-binding site is contributed by threonine 26. The interval 61-65 is G2; it reads GITIS. Residues 82–85 are G3; sequence DCPG. Residues 82–86 and 137–140 contribute to the GTP site; these read DCPGH and NKCD. Residues 137–140 are G4; sequence NKCD. Residues 175–177 form a G5 region; it reads SAL.

The protein belongs to the TRAFAC class translation factor GTPase superfamily. Classic translation factor GTPase family. EF-Tu/EF-1A subfamily. In terms of assembly, monomer.

Its subcellular location is the cytoplasm. The enzyme catalyses GTP + H2O = GDP + phosphate + H(+). Its function is as follows. GTP hydrolase that promotes the GTP-dependent binding of aminoacyl-tRNA to the A-site of ribosomes during protein biosynthesis. The polypeptide is Elongation factor Tu (Lachnoclostridium phytofermentans (strain ATCC 700394 / DSM 18823 / ISDg) (Clostridium phytofermentans)).